A 234-amino-acid polypeptide reads, in one-letter code: tRNA (guanine-N(1)-)-methyltransferase (234 aa).

S-adenosyl-L-methionine-binding positions include glycine 115 and 135 to 140; that span reads VGDYIL.

It belongs to the RNA methyltransferase TrmD family. In terms of assembly, homodimer.

It is found in the cytoplasm. It carries out the reaction guanosine(37) in tRNA + S-adenosyl-L-methionine = N(1)-methylguanosine(37) in tRNA + S-adenosyl-L-homocysteine + H(+). Functionally, specifically methylates guanosine-37 in various tRNAs. The polypeptide is tRNA (guanine-N(1)-)-methyltransferase (Rickettsia peacockii (strain Rustic)).